Here is a 185-residue protein sequence, read N- to C-terminus: Ribosome-recycling factor (185 aa).

The protein belongs to the RRF family.

The protein resides in the cytoplasm. Responsible for the release of ribosomes from messenger RNA at the termination of protein biosynthesis. May increase the efficiency of translation by recycling ribosomes from one round of translation to another. The chain is Ribosome-recycling factor from Buchnera aphidicola subsp. Schizaphis graminum (strain Sg).